Here is a 275-residue protein sequence, read N- to C-terminus: Formamidopyrimidine-DNA glycosylase (275 aa).

The active-site Schiff-base intermediate with DNA is the P2. E3 functions as the Proton donor in the catalytic mechanism. K58 functions as the Proton donor; for beta-elimination activity in the catalytic mechanism. Residues H91 and R110 each coordinate DNA. Residues 238-272 (QVYGQTGKPCPRCGQAIVKLKVGGRGTHICPKCQK) form an FPG-type zinc finger. R262 serves as the catalytic Proton donor; for delta-elimination activity.

It belongs to the FPG family. Monomer. The cofactor is Zn(2+).

The enzyme catalyses Hydrolysis of DNA containing ring-opened 7-methylguanine residues, releasing 2,6-diamino-4-hydroxy-5-(N-methyl)formamidopyrimidine.. It catalyses the reaction 2'-deoxyribonucleotide-(2'-deoxyribose 5'-phosphate)-2'-deoxyribonucleotide-DNA = a 3'-end 2'-deoxyribonucleotide-(2,3-dehydro-2,3-deoxyribose 5'-phosphate)-DNA + a 5'-end 5'-phospho-2'-deoxyribonucleoside-DNA + H(+). Functionally, involved in base excision repair of DNA damaged by oxidation or by mutagenic agents. Acts as a DNA glycosylase that recognizes and removes damaged bases. Has a preference for oxidized purines, such as 7,8-dihydro-8-oxoguanine (8-oxoG). Has AP (apurinic/apyrimidinic) lyase activity and introduces nicks in the DNA strand. Cleaves the DNA backbone by beta-delta elimination to generate a single-strand break at the site of the removed base with both 3'- and 5'-phosphates. In Streptococcus pyogenes serotype M18 (strain MGAS8232), this protein is Formamidopyrimidine-DNA glycosylase.